The sequence spans 179 residues: Laminin-binding fimbrial subunit ElfA (179 aa).

The first 21 residues, 1–21 (MKKSVLTAFITVVCATSSVMA), serve as a signal peptide directing secretion.

Belongs to the fimbrial protein family.

The protein localises to the fimbrium. Part of the elfADCG fimbrial operon, which could be required for adherence to host epithelial cells. ElfA is an accessory colonization factor that contributes to adherence of bacteria to human intestinal epithelial cells and to animal intestinal tissue in vitro. Binds specifically to laminin, but not to fibronectin or collagen type IV. This chain is Laminin-binding fimbrial subunit ElfA (elfA), found in Escherichia coli O157:H7.